We begin with the raw amino-acid sequence, 284 residues long: D-tagatose-1,6-bisphosphate aldolase subunit GatY (284 aa).

Catalysis depends on Asp82, which acts as the Proton donor. 2 residues coordinate Zn(2+): His83 and His180. Gly181 serves as a coordination point for dihydroxyacetone phosphate. Position 208 (His208) interacts with Zn(2+). Residues 209–211 (GAS) and 230–233 (NVAT) contribute to the dihydroxyacetone phosphate site.

It belongs to the class II fructose-bisphosphate aldolase family. TagBP aldolase GatY subfamily. In terms of assembly, forms a complex with GatZ. Zn(2+) is required as a cofactor.

It catalyses the reaction D-tagatofuranose 1,6-bisphosphate = D-glyceraldehyde 3-phosphate + dihydroxyacetone phosphate. The protein operates within carbohydrate metabolism; D-tagatose 6-phosphate degradation; D-glyceraldehyde 3-phosphate and glycerone phosphate from D-tagatose 6-phosphate: step 2/2. Its function is as follows. Catalytic subunit of the tagatose-1,6-bisphosphate aldolase GatYZ, which catalyzes the reversible aldol condensation of dihydroxyacetone phosphate (DHAP or glycerone-phosphate) with glyceraldehyde 3-phosphate (G3P) to produce tagatose 1,6-bisphosphate (TBP). Requires GatZ subunit for full activity and stability. Is involved in the catabolism of galactitol. This Escherichia coli (strain 55989 / EAEC) protein is D-tagatose-1,6-bisphosphate aldolase subunit GatY.